An 802-amino-acid chain; its full sequence is Ribosomal protein S6 kinase alpha-5 (802 aa).

Gly residues predominate over residues 1–22 (MEEEGGSSGGAAGTSADGGDGG). Residues 1 to 23 (MEEEGGSSGGAAGTSADGGDGGE) are disordered. The region spanning 49–318 (FELLKVLGTG…ADEIKEHLFF (270 aa)) is the Protein kinase 1 domain. ATP contacts are provided by residues 55-63 (LGTGAYGKV) and K81. D177 acts as the Proton acceptor in catalysis. Position 212 is a phosphoserine; by autocatalysis (S212). One can recognise an AGC-kinase C-terminal domain in the interval 319–387 (QKINWDDLAA…VAPSILFKRN (69 aa)). At S360 the chain carries Phosphoserine; by MAPK1, MAPK3 and MAPK14. Phosphoserine; by autocatalysis is present on residues S376 and S381. In terms of domain architecture, Protein kinase 2 spans 426-687 (DLKDKPLGEG…MSGLRYNEWL (262 aa)). ATP contacts are provided by residues 432 to 440 (LGEGSFSIC) and K455. Catalysis depends on D544, which acts as the Proton acceptor. T581 carries the phosphothreonine; by MAPK1, MAPK3 and MAPK14 modification. Phosphoserine is present on residues S647, S657, S691, and S695. At T700 the chain carries Phosphothreonine; by MAPK1, MAPK3 and MAPK14. The segment at 741 to 802 (AKRRKMKKTS…TLFQFSDSVA (62 aa)) is disordered. A compositionally biased stretch (low complexity) spans 749-779 (TSTSTETRSSSSESSHSSSSHSHGKTTPTKT). A phosphoserine; by autocatalysis mark is found at S750, S752, and S758. Positions 780–802 (LQPSNPADSNNPETLFQFSDSVA) are enriched in polar residues. At S798 the chain carries Phosphoserine.

The protein belongs to the protein kinase superfamily. AGC Ser/Thr protein kinase family. S6 kinase subfamily. As to quaternary structure, forms a complex with either MAPK1/ERK2 or MAPK3/ERK1 in quiescent cells which transiently dissociates following mitogenic stimulation. Also associates with MAPK14/p38-alpha. Activated RPS6KA5 associates with and phosphorylates the NF-kappa-B p65 subunit RELA. Interacts with CREBBP and EP300. Mg(2+) is required as a cofactor. Post-translationally, ser-376 and Thr-581 phosphorylation is required for kinase activity. Ser-376 and Ser-212 are autophosphorylated by the C-terminal kinase domain, and their phosphorylation is essential for the catalytic activity of the N-terminal kinase domain. Phosphorylated at Ser-360, Thr-581 and Thr-700 by MAPK1/ERK2, MAPK3/ERK1 and MAPK14/p38-alpha. Autophosphorylated at Ser-750, Ser-752 and Ser-758 by the N-terminal kinase domain. In terms of processing, ubiquitinated. Widely expressed with high levels in heart, brain and placenta. Less abundant in lung, kidney and liver.

Its subcellular location is the nucleus. It localises to the cytoplasm. It catalyses the reaction L-seryl-[protein] + ATP = O-phospho-L-seryl-[protein] + ADP + H(+). The enzyme catalyses L-threonyl-[protein] + ATP = O-phospho-L-threonyl-[protein] + ADP + H(+). Its activity is regulated as follows. Activated by phosphorylation at Ser-360, Thr-581 and Thr-700 by MAPK1/ERK2, MAPK3/ERK1 and MAPK14/p38-alpha, and by further autophosphorylation of Ser-212, Ser-376 and Ser-381 by the activated C-terminal kinase domain. The active N-terminal kinase domain finally phosphorylates downstream substrates, as well as Ser-750, Ser-752 and Ser-758 in its own C-terminal region. In terms of biological role, serine/threonine-protein kinase that is required for the mitogen or stress-induced phosphorylation of the transcription factors CREB1 and ATF1 and for the regulation of the transcription factors RELA, STAT3 and ETV1/ER81, and that contributes to gene activation by histone phosphorylation and functions in the regulation of inflammatory genes. Phosphorylates CREB1 and ATF1 in response to mitogenic or stress stimuli such as UV-C irradiation, epidermal growth factor (EGF) and anisomycin. Plays an essential role in the control of RELA transcriptional activity in response to TNF and upon glucocorticoid, associates in the cytoplasm with the glucocorticoid receptor NR3C1 and contributes to RELA inhibition and repression of inflammatory gene expression. In skeletal myoblasts is required for phosphorylation of RELA at 'Ser-276' during oxidative stress. In erythropoietin-stimulated cells, is necessary for the 'Ser-727' phosphorylation of STAT3 and regulation of its transcriptional potential. Phosphorylates ETV1/ER81 at 'Ser-191' and 'Ser-216', and thereby regulates its ability to stimulate transcription, which may be important during development and breast tumor formation. Directly represses transcription via phosphorylation of 'Ser-1' of histone H2A. Phosphorylates 'Ser-10' of histone H3 in response to mitogenics, stress stimuli and EGF, which results in the transcriptional activation of several immediate early genes, including proto-oncogenes c-fos/FOS and c-jun/JUN. May also phosphorylate 'Ser-28' of histone H3. Mediates the mitogen- and stress-induced phosphorylation of high mobility group protein 1 (HMGN1/HMG14). In lipopolysaccharide-stimulated primary macrophages, acts downstream of the Toll-like receptor TLR4 to limit the production of pro-inflammatory cytokines. Functions probably by inducing transcription of the MAP kinase phosphatase DUSP1 and the anti-inflammatory cytokine interleukin 10 (IL10), via CREB1 and ATF1 transcription factors. Plays a role in neuronal cell death by mediating the downstream effects of excitotoxic injury. Phosphorylates TRIM7 at 'Ser-107' in response to growth factor signaling via the MEK/ERK pathway, thereby stimulating its ubiquitin ligase activity. The protein is Ribosomal protein S6 kinase alpha-5 (RPS6KA5) of Homo sapiens (Human).